The primary structure comprises 198 residues: Superoxide dismutase [Fe] (198 aa).

4 residues coordinate Fe cation: H27, H74, D158, and H162.

This sequence belongs to the iron/manganese superoxide dismutase family. In terms of assembly, homodimer. Fe cation serves as cofactor.

Its subcellular location is the cytoplasm. It catalyses the reaction 2 superoxide + 2 H(+) = H2O2 + O2. Functionally, destroys superoxide anion radicals which are normally produced within the cells and which are toxic to biological systems. The protein is Superoxide dismutase [Fe] (SODB) of Plasmodium malariae.